Here is a 622-residue protein sequence, read N- to C-terminus: DNA polymerase II small subunit (622 aa).

A disordered region spans residues 76–113 (ISTGEGSQKVPDHEELEKITNESSVESSISTGETPKTE). Residues 85 to 95 (VPDHEELEKIT) are compositionally biased toward basic and acidic residues. Residues 96–109 (NESSVESSISTGET) show a composition bias toward polar residues.

This sequence belongs to the DNA polymerase delta/II small subunit family. Heterodimer of a large subunit and a small subunit.

It carries out the reaction DNA(n) + a 2'-deoxyribonucleoside 5'-triphosphate = DNA(n+1) + diphosphate. The enzyme catalyses Exonucleolytic cleavage in the 3'- to 5'-direction to yield nucleoside 5'-phosphates.. Functionally, possesses two activities: a DNA synthesis (polymerase) and an exonucleolytic activity that degrades single-stranded DNA in the 3' to 5' direction. Has a template-primer preference which is characteristic of a replicative DNA polymerase. This is DNA polymerase II small subunit (polB) from Pyrococcus horikoshii (strain ATCC 700860 / DSM 12428 / JCM 9974 / NBRC 100139 / OT-3).